The sequence spans 143 residues: Transcriptional regulator MraZ (143 aa).

SpoVT-AbrB domains follow at residues 5-47 (EYHH…PIEE) and 76-119 (AMES…SAER).

It belongs to the MraZ family. As to quaternary structure, forms oligomers.

The protein localises to the cytoplasm. It is found in the nucleoid. This chain is Transcriptional regulator MraZ, found in Lactobacillus gasseri (strain ATCC 33323 / DSM 20243 / BCRC 14619 / CIP 102991 / JCM 1131 / KCTC 3163 / NCIMB 11718 / NCTC 13722 / AM63).